The primary structure comprises 68 residues: MKSNIHPKYEEITVTCSCGNVFKTRSTANRDLHIDLCSECHPFYTGKQRAVSAAGQVEKFRKRYGGGQ.

Zn(2+)-binding residues include Cys-16, Cys-18, Cys-37, and Cys-40.

It belongs to the bacterial ribosomal protein bL31 family. Type A subfamily. Part of the 50S ribosomal subunit. It depends on Zn(2+) as a cofactor.

Binds the 23S rRNA. This is Large ribosomal subunit protein bL31 from Acidithiobacillus ferrooxidans (strain ATCC 23270 / DSM 14882 / CIP 104768 / NCIMB 8455) (Ferrobacillus ferrooxidans (strain ATCC 23270)).